A 327-amino-acid chain; its full sequence is E3 ubiquitin-protein ligase SINAT4 (327 aa).

The tract at residues 1-27 is disordered; that stretch reads METDSMECVSSTGNEIHQNGNGHQSYQ. Positions 8-27 are enriched in polar residues; that stretch reads CVSSTGNEIHQNGNGHQSYQ. An RING-type zinc finger spans residues 64 to 100; sequence CPVCTYSMYPPIHQCHNGHTLCSTCKVRVHNRCPTCR. The SBD stretch occupies residues 114 to 307; sequence VAESLELPCK…KELKLRVTGK (194 aa). The SIAH-type zinc finger occupies 117–177; the sequence is SLELPCKFYN…LVAHLRDDHK (61 aa). Zn(2+) is bound by residues Cys-122, Cys-129, His-141, Cys-145, Cys-152, Cys-159, His-171, and His-176.

It belongs to the SINA (Seven in absentia) family. Interacts with SINAT6. Interacts with WAV3. Interacts with FREE1. Interacts with ELC/VPS23A.

It localises to the endosome. The protein localises to the multivesicular body. It is found in the cytoplasmic vesicle. Its subcellular location is the autophagosome. It catalyses the reaction S-ubiquitinyl-[E2 ubiquitin-conjugating enzyme]-L-cysteine + [acceptor protein]-L-lysine = [E2 ubiquitin-conjugating enzyme]-L-cysteine + N(6)-ubiquitinyl-[acceptor protein]-L-lysine.. It participates in protein modification; protein ubiquitination. Functionally, E3 ubiquitin-protein ligase that mediates ubiquitination and subsequent proteasomal degradation of target proteins. E3 ubiquitin ligases accept ubiquitin from an E2 ubiquitin-conjugating enzyme in the form of a thioester and then directly transfers the ubiquitin to targeted substrates. It probably triggers the ubiquitin-mediated degradation of different substrates. Modulates directly the ubiquitination and proteasomal-dependent degradation of FREE1, a component of the ESCRT-I complex. Modulates directly the ubiquitination and proteasomal-dependent degradation of ELC/VPS23A, a component of the ESCRT-I complex. The protein is E3 ubiquitin-protein ligase SINAT4 of Arabidopsis thaliana (Mouse-ear cress).